Consider the following 1070-residue polypeptide: Isoleucine--tRNA ligase (1070 aa).

Residues 50–60 carry the 'HIGH' region motif; that stretch reads PYTSGAAHMGT. The short motif at 606-610 is the 'KMSKS' region element; the sequence is GMSKS. Residue lysine 609 participates in ATP binding.

It belongs to the class-I aminoacyl-tRNA synthetase family. IleS type 2 subfamily. As to quaternary structure, monomer. Zn(2+) serves as cofactor.

The protein localises to the cytoplasm. The enzyme catalyses tRNA(Ile) + L-isoleucine + ATP = L-isoleucyl-tRNA(Ile) + AMP + diphosphate. In terms of biological role, catalyzes the attachment of isoleucine to tRNA(Ile). As IleRS can inadvertently accommodate and process structurally similar amino acids such as valine, to avoid such errors it has two additional distinct tRNA(Ile)-dependent editing activities. One activity is designated as 'pretransfer' editing and involves the hydrolysis of activated Val-AMP. The other activity is designated 'posttransfer' editing and involves deacylation of mischarged Val-tRNA(Ile). This Halobacterium salinarum (strain ATCC 700922 / JCM 11081 / NRC-1) (Halobacterium halobium) protein is Isoleucine--tRNA ligase.